Here is a 437-residue protein sequence, read N- to C-terminus: Serine carboxypeptidase-like 17 (437 aa).

An N-terminal signal peptide occupies residues 1–26 (MGKECYYLSWILKFHLLLVLIQLVDS). Disulfide bonds link cysteine 85/cysteine 327, cysteine 249/cysteine 263, and cysteine 287/cysteine 293. A glycan (N-linked (GlcNAc...) asparagine) is linked at asparagine 106. Serine 181 is a catalytic residue. Aspartate 362 is a catalytic residue. A glycan (N-linked (GlcNAc...) asparagine) is linked at asparagine 378. Residue histidine 415 is part of the active site.

This sequence belongs to the peptidase S10 family. As to expression, expressed in seedlings and siliques.

The protein resides in the secreted. Its function is as follows. Probable carboxypeptidase. The protein is Serine carboxypeptidase-like 17 (SCPL17) of Arabidopsis thaliana (Mouse-ear cress).